The chain runs to 213 residues: Ribosomal RNA small subunit methyltransferase G (213 aa).

Residues glycine 77, methionine 82, glutamate 104–serine 106, and arginine 145 each bind S-adenosyl-L-methionine.

This sequence belongs to the methyltransferase superfamily. RNA methyltransferase RsmG family.

Its subcellular location is the cytoplasm. The catalysed reaction is guanosine(527) in 16S rRNA + S-adenosyl-L-methionine = N(7)-methylguanosine(527) in 16S rRNA + S-adenosyl-L-homocysteine. Specifically methylates the N7 position of guanine in position 527 of 16S rRNA. This chain is Ribosomal RNA small subunit methyltransferase G, found in Pelagibacter ubique (strain HTCC1062).